Here is a 260-residue protein sequence, read N- to C-terminus: 5'-nucleotidase SurE (260 aa).

D8, D9, S39, and N96 together coordinate a divalent metal cation.

Belongs to the SurE nucleotidase family. The cofactor is a divalent metal cation.

It localises to the cytoplasm. The catalysed reaction is a ribonucleoside 5'-phosphate + H2O = a ribonucleoside + phosphate. Functionally, nucleotidase that shows phosphatase activity on nucleoside 5'-monophosphates. In Moorella thermoacetica (strain ATCC 39073 / JCM 9320), this protein is 5'-nucleotidase SurE.